The chain runs to 535 residues: MEVNVKGNYVQVYVMLPLDAVSVNNRFEKGDELRAQLRKLVEAGVDGVMVDVWWGLVEGKGPKAYDWSAYKQLFELVQKAGLKLQAIMSFHQCGGNVGDAVNIPIPQWVRDVGTRDPDIFYTDGHGTRNIEYLTLGVDNQPLFHGRSAVQMYADYMTSFRENMKDFLDAGVIVDIEVGLGPAGEMRYPSYPQSHGWSFPGIGEFICYDKYLQADFKAAAAAVGHPEWEFPNDVGQYNDTPERTQFFRDNGTYLSEKGRFFLAWYSNNLIKHGDRILDEANKVFLGYKVQLAIKISGIHWWYKVPSHAAELTAGYYNLHDRDGYRTIARMLKRHRASINFTCAEMRDLEQSSQAMSAPEELVQQVLSAGWREGLNVACENALPRYDPTAYNTILRNARPHGINQSGPPEHKLFGFTYLRLSNQLVEGQNYVNFKTFVDRMHANLPRDPYVDPMAPLPRSGPEISIEMILQAAQPKLQPFPFQEHTDLPVGPTGGMGGQAEGPTCGMGGQVKGPTGGMGGQAEDPTSGIGGELPATM.

Positions 51, 91, and 99 each coordinate substrate. The active-site Proton donor is Glu-184. Residues Lys-293, His-298, and Thr-340 each coordinate substrate. Catalysis depends on Glu-378, which acts as the Proton acceptor. Substrate-binding positions include 379–380 (NA) and Arg-418. Repeat copies occupy residues 489 to 499 (GPTGGMGGQAE), 500 to 510 (GPTCGMGGQVK), and 511 to 521 (GPTGGMGGQAE). The segment at 489–532 (GPTGGMGGQAEGPTCGMGGQVKGPTGGMGGQAEDPTSGIGGELP) is 4 X 11 AA tandem repeats. The tract at residues 513–535 (TGGMGGQAEDPTSGIGGELPATM) is disordered. One copy of the 4; approximate repeat lies at 522-532 (DPTSGIGGELP).

Belongs to the glycosyl hydrolase 14 family. In terms of assembly, monomer.

It carries out the reaction Hydrolysis of (1-&gt;4)-alpha-D-glucosidic linkages in polysaccharides so as to remove successive maltose units from the non-reducing ends of the chains.. This is Beta-amylase (BMY1) from Hordeum vulgare (Barley).